The chain runs to 529 residues: Potassium voltage-gated channel subfamily A member 6 (529 aa).

A disordered region spans residues 1-35 (MRSEKSLTLAAPGEVRGPEGEQQDAGEFQEAEGGG). Over 1 to 171 (MRSEKSLTLA…LLFEYPESSG (171 aa)) the chain is Cytoplasmic. S3 carries the phosphoserine modification. Acidic residues predominate over residues 21–30 (EQQDAGEFQE). Residues 172–193 (PARGIAIVSVLVILISIVIFCL) form a helical membrane-spanning segment. Topologically, residues 194–262 (ETLPQFRADG…TLGGSFFTDP (69 aa)) are extracellular. Residues 203–238 (GRGGSNEGSGTRLSPASRSHEEEDEDEDSYAFPGSI) form a disordered region. Positions 210–219 (GSGTRLSPAS) are enriched in polar residues. The helical transmembrane segment at 263–284 (FFLVETLCIVWFTFELLVRFSA) threads the bilayer. Residue C285 is the site of S-palmitoyl cysteine attachment. Over 285-295 (CPSKAAFFRNI) the chain is Cytoplasmic. The chain crosses the membrane as a helical span at residues 296 to 316 (MNIIDLVAIFPYFITLGTELV). Topologically, residues 317–337 (QRHEQQSVSGGSGQNGQQAMS) are extracellular. Residues 338–358 (LAILRVIRLVRVFRIFKLSRH) traverse the membrane as a helical; Voltage-sensor segment. Residues 359–373 (SKGLQILGKTLQASM) lie on the Cytoplasmic side of the membrane. An S4-S5 linker region spans residues 360-373 (KGLQILGKTLQASM). The chain crosses the membrane as a helical span at residues 374–395 (RELGLLIFFLFIGVILFSSAVY). The Extracellular segment spans residues 396–409 (FAEADDVDSLFPSI). The helical intramembrane region spans 410-421 (PDAFWWAVVTMT). The Selectivity filter motif lies at 422 to 427 (TVGYGD). An intramembrane segment occupies 422–429 (TVGYGDMY). At 430–436 (PMTVGGK) the chain is on the extracellular side. A helical transmembrane segment spans residues 437-465 (IVGSLCAIAGVLTIALPVPVIVSNFNYFY). Topologically, residues 466–529 (HRETEQEEQG…YAEKRMLTEV (64 aa)) are cytoplasmic. The disordered stretch occupies residues 488–513 (DLKATDNGLGKPDFAEASRERRPSYL). Over residues 500–510 (DFAEASRERRP) the composition is skewed to basic and acidic residues. S511 carries the phosphoserine; by PKA modification. The PDZ-binding signature appears at 527-529 (TEV).

The protein belongs to the potassium channel family. A (Shaker) (TC 1.A.1.2) subfamily. Kv1.6/KCNA6 sub-subfamily. In terms of assembly, homotetramer and heterotetramer of potassium channel proteins. Interacts with KCNAB1 and KCNAB2.

The protein resides in the cell membrane. It catalyses the reaction K(+)(in) = K(+)(out). Functionally, voltage-gated potassium channel that mediates transmembrane potassium transport in excitable membranes. Forms tetrameric potassium-selective channels through which potassium ions pass in accordance with their electrochemical gradient. The channel alternates between opened and closed conformations in response to the voltage difference across the membrane. Can form functional homotetrameric channels and heterotetrameric channels that contain variable proportions of KCNA1, KCNA2, KCNA4, KCNA6, and possibly other family members as well; channel properties depend on the type of alpha subunits that are part of the channel. Channel properties are modulated by cytoplasmic beta subunits that regulate the subcellular location of the alpha subunits and promote rapid inactivation. Homotetrameric channels display rapid activation and slow inactivation. In Mus musculus (Mouse), this protein is Potassium voltage-gated channel subfamily A member 6 (Kcna6).